The sequence spans 66 residues: Cold shock protein 2 (66 aa).

One can recognise a CSD domain in the interval 4–63 (GTVKWFNADKGFGFITGEDGTDVFVHFSAIQTDGFKTLDEGQKVTYDEEQGDRGPQATNV).

The protein resides in the cytoplasm. The polypeptide is Cold shock protein 2 (cspL) (Lactiplantibacillus plantarum (strain ATCC BAA-793 / NCIMB 8826 / WCFS1) (Lactobacillus plantarum)).